The chain runs to 421 residues: Non-homologous end-joining factor LIF1 (421 aa).

The interval 1–196 (MSQLTEFISC…VEQLAREREL (196 aa)) is interaction with NEJ1. Residues 365-421 (GIQISAGRSDEDYGDISGSESETDASAGEKKSSNHSEQSGNDREPCLQTESETDIET) are disordered. The span at 391-409 (AGEKKSSNHSEQSGNDREP) shows a compositional bias: basic and acidic residues.

Belongs to the XRCC4-XLF family. XLF subfamily. As to quaternary structure, interacts with DNL4 (via BRCT domain). Interacts (via N-terminus) with NEJ1 (via C-terminus); the interaction is direct. The DNL4-LIF1 complex interacts with POL4.

The protein resides in the cytoplasm. Its subcellular location is the nucleus. Involved in non-homologous repair of DNA double-strand breaks. Stabilizes DNL4. This Saccharomyces cerevisiae (strain ATCC 204508 / S288c) (Baker's yeast) protein is Non-homologous end-joining factor LIF1 (LIF1).